The primary structure comprises 129 residues: Small ribosomal subunit protein bS6 (129 aa).

Residues 103–129 are disordered; that stretch reads LKQKEERAERAPRREERAEAKPEAAAE. Residues 104–129 are compositionally biased toward basic and acidic residues; that stretch reads KQKEERAERAPRREERAEAKPEAAAE.

The protein belongs to the bacterial ribosomal protein bS6 family.

Its function is as follows. Binds together with bS18 to 16S ribosomal RNA. This Vibrio campbellii (strain ATCC BAA-1116) protein is Small ribosomal subunit protein bS6.